Here is a 58-residue protein sequence, read N- to C-terminus: Large ribosomal subunit protein bL32 (58 aa).

The segment covering 1–15 has biased composition (basic residues); that stretch reads MAVPKKKTSKAKRNQ. The disordered stretch occupies residues 1–23; the sequence is MAVPKKKTSKAKRNQRSATWKGK.

This sequence belongs to the bacterial ribosomal protein bL32 family.

In Synechococcus sp. (strain CC9902), this protein is Large ribosomal subunit protein bL32.